The chain runs to 600 residues: MTKEIILGIDLGTTNSCVAVIENKKPIVLENPEGKRTVPSVVSFNGDEVLVGDAAKRKQITNPNTVSSIKRLMGTKEKVTILNKEYTPEEISAKILSYIKDYAEKKLGTKINKAVITVPAYFDDAQRQATKNAGIIAGLTVERIINEPTAAALAYGIDKLDKEQKILVFDLGGGTFDVSVLDMADGTFEVLSTSGDNHLGGDDWDQVIINWLLKSIADEFNIDLSKNKMAMQRLKDAAEKAKIELSGVNTTTISLPFIAMDSSGQPINFEKELNRATFDNLTKNLIERLKKPVLDAMKESKLSLADIDQVLMVGGSTRMPAVQNLVKELTGKEPNHSLNPDEVVAIGAAIQGGVLAGEIDDILLLDVTPLTLSIETMGGVATPLIPRNTKIPVSKSQVFSTAADNQPSVDIRIVQGERSLAADNKLLGNFELSGIEPAPRGVPQIEIKFNIDANGIMSVNAKDLKTQKETSITIKDSQGLSQEEIDKMIKEAEENKEKDAKVKHERELVNRADSLINQLEQVVKTENVPQEQKDAFNKQIEELTNARDAQDYTKLEAEVKKVEDLLANAAKFAQQTQQQDPNNQKDDVTEATVTDDSTKK.

Residue T175 is modified to Phosphothreonine; by autocatalysis. A disordered region spans residues 572-600 (FAQQTQQQDPNNQKDDVTEATVTDDSTKK). A compositionally biased stretch (polar residues) spans 591–600 (ATVTDDSTKK).

The protein belongs to the heat shock protein 70 family.

Its function is as follows. Acts as a chaperone. The protein is Chaperone protein DnaK of Ureaplasma urealyticum serovar 10 (strain ATCC 33699 / Western).